A 187-amino-acid chain; its full sequence is MKTAQELRAGNVFMVGSDPMVVQKAEFSKSGRNASVVKMKMKNLLTGAGSEAVYRADDKFDVVVLDRKDCTYSYFADPMYVFMDTEFNQYEVEADNLGDTINYIVDGMEDVCQVTFYDGKAISVELPTTVIREVEYTEPAVRGDTSGKVLKPARLVGTTFEVQVPAFVNTGEKIEIDTRTNEFKKRA.

Belongs to the elongation factor P family.

It is found in the cytoplasm. The protein operates within protein biosynthesis; polypeptide chain elongation. Functionally, involved in peptide bond synthesis. Stimulates efficient translation and peptide-bond synthesis on native or reconstituted 70S ribosomes in vitro. Probably functions indirectly by altering the affinity of the ribosome for aminoacyl-tRNA, thus increasing their reactivity as acceptors for peptidyl transferase. The chain is Elongation factor P from Chromobacterium violaceum (strain ATCC 12472 / DSM 30191 / JCM 1249 / CCUG 213 / NBRC 12614 / NCIMB 9131 / NCTC 9757 / MK).